We begin with the raw amino-acid sequence, 548 residues long: tRNA (guanine(26)-N(2))-dimethyltransferase (548 aa).

Positions 30-470 (ASLTEGSAII…APWSFVWDVL (441 aa)) constitute a Trm1 methyltransferase domain. Positions 57, 137, 155, and 186 each coordinate S-adenosyl-L-methionine. Zn(2+) is bound by residues Cys-317, Cys-320, Cys-354, and Cys-357. The segment at 523–548 (QMNPTENWGPKSKPGKRTIAEVDSKS) is disordered.

It belongs to the class I-like SAM-binding methyltransferase superfamily. Trm1 family.

The protein resides in the mitochondrion. It is found in the nucleus. It localises to the cytoplasm. The enzyme catalyses guanosine(26) in tRNA + 2 S-adenosyl-L-methionine = N(2)-dimethylguanosine(26) in tRNA + 2 S-adenosyl-L-homocysteine + 2 H(+). In terms of biological role, dimethylates a single guanine residue at position 26 of nuclear- and mitochondrial-encoded tRNAs using S-adenosyl-L-methionine as donor of the methyl groups. Also has tRNA strand annealing and dissociation activity independently of its tRNA guanine-dimethyltransferase activity. The polypeptide is tRNA (guanine(26)-N(2))-dimethyltransferase (Schizosaccharomyces pombe (strain 972 / ATCC 24843) (Fission yeast)).